A 254-amino-acid polypeptide reads, in one-letter code: Very-long-chain (3R)-3-hydroxyacyl-CoA dehydratase 2 (254 aa).

The span at 1 to 10 shows a compositional bias: low complexity; it reads MAAAAATAAT. The tract at residues 1–34 is disordered; sequence MAAAAATAATKGNGGGSGRVGAGDSSGARKKKGP. At A2 the chain carries N-acetylalanine. Residues 2-41 are Cytoplasmic-facing; sequence AAAAATAATKGNGGGSGRVGAGDSSGARKKKGPGPVATAY. Gly residues predominate over residues 12–21; the sequence is GNGGGSGRVG. Residues 42 to 60 traverse the membrane as a helical segment; sequence LVIYNVVMTAGWLVIAVGL. The Lumenal segment spans residues 61-79; the sequence is VRAYLAKGSYHSLYYSIER. A helical membrane pass occupies residues 80–97; sequence PLKFFQTGALLEILHCAI. Over 98-107 the chain is Cytoplasmic; sequence GIVPSSVVLT. Residues 108 to 125 traverse the membrane as a helical segment; it reads SFQVMSRVFLIWAVTHSV. Residues 126–130 are Lumenal-facing; that stretch reads KEVQS. The chain crosses the membrane as a helical span at residues 131-146; the sequence is EDSVLLFVIAWTITEI. Topologically, residues 147 to 169 are cytoplasmic; sequence IRYSFYTFSLLNHLPYIIKWARY. Residues 170–187 traverse the membrane as a helical segment; the sequence is TLFIVLYPMGVTGELLTI. Catalysis depends on residues Y176 and E183. At 188 to 217 the chain is on the lumenal side; sequence YAALPFVRQAGLYSISLPNKYNFSFDYHAF. Positions 198 to 214 are may be involved in interaction with TECR; it reads GLYSISLPNKYNFSFDY. N209 is a glycosylation site (N-linked (GlcNAc...) asparagine). Residues 218–235 traverse the membrane as a helical segment; it reads LILIMISYIPLFPQLYFH. Topologically, residues 236-254 are cytoplasmic; the sequence is MIHQRRKVLSHTEEHKKFE.

It belongs to the very long-chain fatty acids dehydratase HACD family. As to quaternary structure, may interact with enzymes of the ELO family (including ELOVL1); with those enzymes that mediate condensation, the first of the four steps of the reaction cycle responsible for fatty acids elongation, may be part of a larger fatty acids elongase complex. Interacts with BCAP31. Interacts with TECR.

The protein resides in the endoplasmic reticulum membrane. It catalyses the reaction a very-long-chain (3R)-3-hydroxyacyl-CoA = a very-long-chain (2E)-enoyl-CoA + H2O. The enzyme catalyses (3R)-hydroxyhexadecanoyl-CoA = (2E)-hexadecenoyl-CoA + H2O. The catalysed reaction is (3R)-hydroxyoctadecanoyl-CoA = (2E)-octadecenoyl-CoA + H2O. It carries out the reaction (3R)-hydroxyeicosanoyl-CoA = (2E)-eicosenoyl-CoA + H2O. It catalyses the reaction (3R)-hydroxydocosanoyl-CoA = (2E)-docosenoyl-CoA + H2O. The enzyme catalyses (3R)-hydroxytetracosanoyl-CoA = (2E)-tetracosenoyl-CoA + H2O. The catalysed reaction is (3R)-hydroxyhexacosanoyl-CoA = (2E)-hexacosenoyl-CoA + H2O. The protein operates within lipid metabolism; fatty acid biosynthesis. Catalyzes the third of the very long-chain fatty acids (VLCFA) elongation four-step cycle (condensation, reduction, dehydration, and reduction). This endoplasmic reticulum-elongation process is characterized by the addition of two carbons to the lipid chain through each cycle. This enzyme catalyzes the dehydration of the 3-hydroxyacyl-CoA intermediate into trans-2,3-enoyl-CoA, within each cycle of elongation. Therefore, it participates in the production of various VLCFAs involved in multiple biological processes as precursors of membrane lipids and lipid mediators. The chain is Very-long-chain (3R)-3-hydroxyacyl-CoA dehydratase 2 from Mus musculus (Mouse).